The chain runs to 261 residues: Cytochrome c oxidase subunit 3 (261 aa).

Residues 1–15 are Mitochondrial matrix-facing; the sequence is MTHQTHAYHMVDPSP. A helical transmembrane segment spans residues 16-34; the sequence is WPLTGALSALLMTSGLTMW. At 35–40 the chain is on the mitochondrial intermembrane side; the sequence is FHYHSV. The chain crosses the membrane as a helical span at residues 41–66; the sequence is VLLFLGLMTNTLTMFQWWRDVVREGT. The Mitochondrial matrix segment spans residues 67 to 72; that stretch reads FQGHHT. Residues 73 to 105 traverse the membrane as a helical segment; that stretch reads PVVQEGLRYGMILFITSEVLFFTGFFWAFYHSS. Topologically, residues 106–128 are mitochondrial intermembrane; the sequence is LAPTPELGSYWPPVGVYPLNPLE. Residues 129–152 traverse the membrane as a helical segment; it reads VPLLNTSVLLASGVTITWAHHSLM. The Mitochondrial matrix segment spans residues 153-155; sequence EGN. A helical membrane pass occupies residues 156–183; sequence RKNMLQALLITILLGVYFTLLQMFEYYE. The Mitochondrial intermembrane portion of the chain corresponds to 184–190; it reads ASFTISD. The chain crosses the membrane as a helical span at residues 191–223; sequence GIYGSTFFVTTGFHGLHVIIGSTFLLTCFIRQL. Over 224 to 232 the chain is Mitochondrial matrix; sequence KFHFTSNHH. The helical transmembrane segment at 233–256 threads the bilayer; it reads FGFEAAAWYWHFVDVVWLFLYLSI. At 257–261 the chain is on the mitochondrial intermembrane side; the sequence is YWWGS.

The protein belongs to the cytochrome c oxidase subunit 3 family. As to quaternary structure, component of the cytochrome c oxidase (complex IV, CIV), a multisubunit enzyme composed of 14 subunits. The complex is composed of a catalytic core of 3 subunits MT-CO1, MT-CO2 and MT-CO3, encoded in the mitochondrial DNA, and 11 supernumerary subunits COX4I, COX5A, COX5B, COX6A, COX6B, COX6C, COX7A, COX7B, COX7C, COX8 and NDUFA4, which are encoded in the nuclear genome. The complex exists as a monomer or a dimer and forms supercomplexes (SCs) in the inner mitochondrial membrane with NADH-ubiquinone oxidoreductase (complex I, CI) and ubiquinol-cytochrome c oxidoreductase (cytochrome b-c1 complex, complex III, CIII), resulting in different assemblies (supercomplex SCI(1)III(2)IV(1) and megacomplex MCI(2)III(2)IV(2)).

Its subcellular location is the mitochondrion inner membrane. It catalyses the reaction 4 Fe(II)-[cytochrome c] + O2 + 8 H(+)(in) = 4 Fe(III)-[cytochrome c] + 2 H2O + 4 H(+)(out). Component of the cytochrome c oxidase, the last enzyme in the mitochondrial electron transport chain which drives oxidative phosphorylation. The respiratory chain contains 3 multisubunit complexes succinate dehydrogenase (complex II, CII), ubiquinol-cytochrome c oxidoreductase (cytochrome b-c1 complex, complex III, CIII) and cytochrome c oxidase (complex IV, CIV), that cooperate to transfer electrons derived from NADH and succinate to molecular oxygen, creating an electrochemical gradient over the inner membrane that drives transmembrane transport and the ATP synthase. Cytochrome c oxidase is the component of the respiratory chain that catalyzes the reduction of oxygen to water. Electrons originating from reduced cytochrome c in the intermembrane space (IMS) are transferred via the dinuclear copper A center (CU(A)) of subunit 2 and heme A of subunit 1 to the active site in subunit 1, a binuclear center (BNC) formed by heme A3 and copper B (CU(B)). The BNC reduces molecular oxygen to 2 water molecules using 4 electrons from cytochrome c in the IMS and 4 protons from the mitochondrial matrix. The polypeptide is Cytochrome c oxidase subunit 3 (MT-CO3) (Mammuthus primigenius (Siberian woolly mammoth)).